A 262-amino-acid chain; its full sequence is Mitochondrial calcium uniporter regulator 1 (262 aa).

The stretch at 138–175 forms a coiled coil; the sequence is EKSEFSALRTQNEKVKIELQQLKKQLNDSIVKVRASNK. Residues 239–261 form a helical membrane-spanning segment; the sequence is TIKYLAGSVFTCLTIALGFYRLW.

This sequence belongs to the CCDC90 family.

The protein resides in the mitochondrion inner membrane. Its function is as follows. Key regulator of mitochondrial calcium uniporter (mcu) required for calcium entry into mitochondrion. The chain is Mitochondrial calcium uniporter regulator 1 from Xenopus tropicalis (Western clawed frog).